We begin with the raw amino-acid sequence, 705 residues long: Tryptophan synthase (705 aa).

Residues 1–293 (MEAIKKVFEQ…QLTPNAETAK (293 aa)) are tryptophan synthase alpha chain. Active-site proton acceptor residues include E49 and D60. The tract at residues 266 to 287 (KGEPSRVRSPGAAQRTPSQLTP) is disordered. A tryptophan synthase beta chain region spans residues 294–705 (GVENILPARF…HVSSNAIPSK (412 aa)). The residue at position 381 (K381) is an N6-(pyridoxal phosphate)lysine.

This sequence in the N-terminal section; belongs to the TrpA family. It in the C-terminal section; belongs to the TrpB family. Pyridoxal 5'-phosphate serves as cofactor.

The enzyme catalyses (1S,2R)-1-C-(indol-3-yl)glycerol 3-phosphate + L-serine = D-glyceraldehyde 3-phosphate + L-tryptophan + H2O. It participates in amino-acid biosynthesis; L-tryptophan biosynthesis; L-tryptophan from chorismate: step 5/5. The chain is Tryptophan synthase (TRP-1) from Coprinopsis cinerea (Inky cap fungus).